The chain runs to 161 residues: MKAVSPVRPSGRKAPSGCGGGELALRCLAEHGHSLGGSAAAAAAAAAARCKAAEAAADEPALCLQCDMNDCYSRLRRLVPTIPPNKKVSKVEILQHVIDYILDLQLALETHPALLRQPPPPAPPLHPAGACPVAPPRTPLTALNTDPAGAVNKQGDSILCR.

Residues 52-104 (AAEAAADEPALCLQCDMNDCYSRLRRLVPTIPPNKKVSKVEILQHVIDYILDL) form the bHLH domain.

In terms of assembly, heterodimer with other HLH proteins.

The protein resides in the nucleus. Transcriptional regulator (lacking a basic DNA binding domain) which negatively regulates the basic helix-loop-helix (bHLH) transcription factors by forming heterodimers and inhibiting their DNA binding and transcriptional activity. Implicated in regulating a variety of cellular processes, including cellular growth, senescence, differentiation, apoptosis, angiogenesis, and neoplastic transformation. This is DNA-binding protein inhibitor ID-4 (Id4) from Mus musculus (Mouse).